We begin with the raw amino-acid sequence, 302 residues long: Nucleoside kinase (302 aa).

Substrate-binding residues include aspartate 17, glutamine 33, glycine 43, and asparagine 47. Glutamine 109 contacts ATP. Substrate is bound by residues 111-113 (TFF) and glutamine 163. Residues asparagine 186 and 214–219 (TKGSKG) each bind ATP. Aspartate 247 is a binding site for substrate. Catalysis depends on aspartate 247, which acts as the Proton acceptor.

Homodimer. Mg(2+) is required as a cofactor. Mn(2+) serves as cofactor.

The enzyme catalyses cytidine + ATP = CMP + ADP + H(+). It catalyses the reaction guanosine + ATP = GMP + ADP + H(+). It carries out the reaction inosine + ATP = IMP + ADP + H(+). Catalyzes the phosphorylation of a wide range of nucleosides to yield nucleoside monophosphates. Shows the highest activity for inosine, guanosine and cytidine, but very poor kinase activity with adenosine, thymidine, uridine and xanthosine. ATP is the best phosphate donor, but can also use ITP and GTP. Shows extremely low activity with fructose-6-phosphate. The sequence is that of Nucleoside kinase from Methanocaldococcus jannaschii (strain ATCC 43067 / DSM 2661 / JAL-1 / JCM 10045 / NBRC 100440) (Methanococcus jannaschii).